Consider the following 379-residue polypeptide: uncharacterized protein (379 aa).

It belongs to the mimivirus L17x/L18x family.

This is an uncharacterized protein from Acanthamoeba polyphaga mimivirus (APMV).